The following is an 880-amino-acid chain: Interference hedgehog (880 aa).

An N-terminal signal peptide occupies residues 1–20 (MTLLTSSLLLFSLLTSRLEA). The Extracellular segment spans residues 21 to 703 (IPVLEKSPAH…ETFNMSPMLT (683 aa)). Ig-like C2-type domains lie at 45-142 (PGVR…TARL), 155-232 (PESP…ERIQ), 252-340 (PHLL…YIKV), and 346-432 (PQIV…LQVN). Cystine bridges form between Cys-68-Cys-126, Cys-173-Cys-220, Cys-276-Cys-324, and Cys-367-Cys-414. N-linked (GlcNAc...) asparagine glycosylation is found at Asn-102 and Asn-209. A disordered region spans residues 429–467 (LQVNPKQIQEPRESGGTHRPNPNQGSKHKQMYPPTPPNV). 2 Fibronectin type-III domains span residues 461-567 (PPTP…LQPG) and 575-670 (VPEL…TQRP). The N-linked (GlcNAc...) asparagine glycan is linked to Asn-466. Residues Arg-497, Lys-501, Lys-503, and Arg-541 each coordinate heparin. N-linked (GlcNAc...) asparagine glycosylation is present at Asn-557. The interval 662–692 (LKQGRTQRPKTSTTEEPTLQMGDRDTTTPSH) is disordered. Polar residues predominate over residues 665–678 (GRTQRPKTSTTEEP). N-linked (GlcNAc...) asparagine glycosylation is present at Asn-693. The helical transmembrane segment at 704 to 724 (GTIGGGAVLILLLISTCLCVC) threads the bilayer. The Cytoplasmic portion of the chain corresponds to 725–880 (RRRNSRSRGN…SSGSLNSVGV (156 aa)). 2 disordered regions span residues 728-762 (NSRS…QRQR) and 775-880 (QQQQ…SVGV). Low complexity-rich tracts occupy residues 823–837 (RAGG…NNNN) and 864–880 (SSRS…SVGV).

The protein belongs to the immunoglobulin superfamily. IHOG family. Homodimer. Heterotetramer; 2 iHog chains bind 2 hh chains when facilitated by heparin, heparin is required to promote high-affinity interactions between hh and iHog.

It localises to the membrane. Functionally, mediates response to the active Hedgehog (Hh) protein signal in embryos, functioning upstream or at the level of patched (ptc). This is Interference hedgehog from Drosophila simulans (Fruit fly).